The sequence spans 401 residues: MSEQQTASLGEFTFECGESIPDLELAYETYGEFTGDNAVLVCHALTGSAHVAGGRRRSDTSGQAHAWWDDIVGPGKAVDTTDYYVICANIPGSCYGSSGPPSTNPETGEPWGTTFPAVTVGDWTRAQRRLLDHLGVPHLHAVVGGSVGGMNVLDWAKRHPDHVNRVAVVAAAARLDPQCLALDAIARRAITTDPNWNGGDYYGEDPPVEGLALARQIGHVMYLSKSSMQDKFGRRSSGIDAGRDSFEMDPAAGFFPYREVESYLDYQGEKFARRFDANSYLYLTRAMDNYDLASGYESDRDALAAFDGEALLISFTGDWHFTVEQSEAVADAFRESGTDTAHHVVDSDHGHDAFLVEPDRVGPPLDDFLVDGVAGKAVSDTTPDDDDGDEFAPVHTSLFSD.

Positions 37–358 constitute an AB hydrolase-1 domain; the sequence is NAVLVCHALT…HGHDAFLVEP (322 aa). The Nucleophile role is filled by serine 146. Arginine 215 provides a ligand contact to substrate. Catalysis depends on residues aspartate 318 and histidine 351. Substrate is bound at residue aspartate 352.

Belongs to the AB hydrolase superfamily. MetX family. As to quaternary structure, homodimer.

It localises to the cytoplasm. The catalysed reaction is L-homoserine + acetyl-CoA = O-acetyl-L-homoserine + CoA. Its pathway is amino-acid biosynthesis; L-methionine biosynthesis via de novo pathway; O-acetyl-L-homoserine from L-homoserine: step 1/1. Transfers an acetyl group from acetyl-CoA to L-homoserine, forming acetyl-L-homoserine. The protein is Homoserine O-acetyltransferase of Natronomonas pharaonis (strain ATCC 35678 / DSM 2160 / CIP 103997 / JCM 8858 / NBRC 14720 / NCIMB 2260 / Gabara) (Halobacterium pharaonis).